Here is a 198-residue protein sequence, read N- to C-terminus: Chitin synthase 2 (198 aa).

Belongs to the chitin synthase family. Class III subfamily.

Its subcellular location is the cell membrane. It carries out the reaction [(1-&gt;4)-N-acetyl-beta-D-glucosaminyl](n) + UDP-N-acetyl-alpha-D-glucosamine = [(1-&gt;4)-N-acetyl-beta-D-glucosaminyl](n+1) + UDP + H(+). In terms of biological role, polymerizes chitin, a structural polymer of the cell wall and septum, by transferring the sugar moiety of UDP-GlcNAc to the non-reducing end of the growing chitin polymer. The chain is Chitin synthase 2 (CHS2) from Rhinocladiella atrovirens.